A 467-amino-acid polypeptide reads, in one-letter code: A-type ATP synthase subunit B (467 aa).

Residues 95 to 114 are disordered; the sequence is GKGQPRDHMPLPPPEDFRDV.

This sequence belongs to the ATPase alpha/beta chains family. As to quaternary structure, has multiple subunits with at least A(3), B(3), C, D, E, F, H, I and proteolipid K(x).

Its subcellular location is the cell membrane. In terms of biological role, component of the A-type ATP synthase that produces ATP from ADP in the presence of a proton gradient across the membrane. The B chain is a regulatory subunit. The protein is A-type ATP synthase subunit B of Pyrobaculum aerophilum (strain ATCC 51768 / DSM 7523 / JCM 9630 / CIP 104966 / NBRC 100827 / IM2).